We begin with the raw amino-acid sequence, 60 residues long: Acidic phospholipase A2 (60 aa).

Tyr27, Gly29, and Gly31 together coordinate Ca(2+). Cysteines 28 and 44 form a disulfide. The active site involves His47. Asp48 lines the Ca(2+) pocket.

Belongs to the phospholipase A2 family. Group II subfamily. D49 sub-subfamily. Monomer. Ca(2+) serves as cofactor. As to expression, expressed by the venom gland.

It localises to the secreted. It catalyses the reaction a 1,2-diacyl-sn-glycero-3-phosphocholine + H2O = a 1-acyl-sn-glycero-3-phosphocholine + a fatty acid + H(+). Snake venom phospholipase A2 (PLA2) that exhibits an indirect hemolytic activity, a low myotoxicity, and induces edema. In addition, this enzyme has been shown to induce the release of some pro- and anti-inflammatory cytokines from human PBMC (IL12B, TNF-alpha, IL1B and IL6 but not variation has been observed for IL-8 and IL-10). PLA2 catalyzes the calcium-dependent hydrolysis of the 2-acyl groups in 3-sn-phosphoglycerides. The protein is Acidic phospholipase A2 of Bothrops leucurus (Whitetail lancehead).